We begin with the raw amino-acid sequence, 642 residues long: Threonine--tRNA ligase (642 aa).

A TGS domain is found at 1–61 (MPVITLPDGS…ETDAELSIIT (61 aa)). Positions 243 to 534 (DHRKIGKQLD…LIEEYAGRFP (292 aa)) are catalytic. Positions 334, 385, and 511 each coordinate Zn(2+).

It belongs to the class-II aminoacyl-tRNA synthetase family. Homodimer. It depends on Zn(2+) as a cofactor.

The protein localises to the cytoplasm. The enzyme catalyses tRNA(Thr) + L-threonine + ATP = L-threonyl-tRNA(Thr) + AMP + diphosphate + H(+). In terms of biological role, catalyzes the attachment of threonine to tRNA(Thr) in a two-step reaction: L-threonine is first activated by ATP to form Thr-AMP and then transferred to the acceptor end of tRNA(Thr). Also edits incorrectly charged L-seryl-tRNA(Thr). The sequence is that of Threonine--tRNA ligase from Shewanella oneidensis (strain ATCC 700550 / JCM 31522 / CIP 106686 / LMG 19005 / NCIMB 14063 / MR-1).